Reading from the N-terminus, the 100-residue chain is Small ribosomal subunit protein uS14c (100 aa).

This sequence belongs to the universal ribosomal protein uS14 family. In terms of assembly, part of the 30S ribosomal subunit.

It is found in the plastid. It localises to the chloroplast. Its function is as follows. Binds 16S rRNA, required for the assembly of 30S particles. In Oenothera argillicola (Appalachian evening primrose), this protein is Small ribosomal subunit protein uS14c.